The chain runs to 601 residues: NAD-dependent malic enzyme 59 kDa isoform, mitochondrial (601 aa).

The transit peptide at 1–18 directs the protein to the mitochondrion; the sequence is MWRVARSAASTFRRTRRL. The Proton donor role is filled by Y129. Residue R182 participates in NAD(+) binding. The active-site Proton acceptor is the K200. Residues E271, D272, and D295 each contribute to the a divalent metal cation site. D295 and N444 together coordinate NAD(+).

Belongs to the malic enzymes family. As to quaternary structure, heterodimer of two related subunits. Mg(2+) is required as a cofactor. Requires Mn(2+) as cofactor.

It is found in the mitochondrion matrix. It carries out the reaction (S)-malate + NAD(+) = pyruvate + CO2 + NADH. The polypeptide is NAD-dependent malic enzyme 59 kDa isoform, mitochondrial (Solanum tuberosum (Potato)).